The following is a 303-amino-acid chain: Probable cell division protein WhiA (303 aa).

Positions 272–303 form a DNA-binding region, H-T-H motif; it reads SIQQLADSLSTPLTKSGVNHRLRKINKIADEL.

It belongs to the WhiA family.

Functionally, involved in cell division and chromosome segregation. This Streptococcus pneumoniae serotype 2 (strain D39 / NCTC 7466) protein is Probable cell division protein WhiA.